The chain runs to 217 residues: MARRPDEEYDYLFKVVLIGDSGVGKSNLLSRFTRNEFCLESKSTIGVEFATRTLQVEGRTVKAQIWDTAGQERYRAITSAYYRGALGALLVYDVTKPTTFENVSRWLKELRDHADSNIVIMLIGNKTDLKHLRAVATEDAQSYAEKEGLSFIETSALEALNVEKAFQTILSEVYRIISKKSISSDQTTANANIKEGQTIDVAATSESNAKKPCCSSS.

Gly19–Ser26 serves as a coordination point for GTP. Positions Ser41–Phe49 match the Effector region motif. GTP is bound by residues Asp67–Gln71, Asn125–Asp128, and Ser155–Ala156. The S-palmitoyl cysteine moiety is linked to residue Cys213. At Cys214 the chain carries Cysteine methyl ester. Cys214 carries the S-geranylgeranyl cysteine lipid modification. A propeptide spans Ser215–Ser217 (removed in mature form).

It belongs to the small GTPase superfamily. Rab family. In terms of tissue distribution, expressed in root tips.

Its subcellular location is the endosome membrane. It is found in the golgi apparatus. It localises to the trans-Golgi network membrane. Its function is as follows. Intracellular vesicle trafficking and protein transport. The protein is Ras-related protein RABA2a (RABA2A) of Arabidopsis thaliana (Mouse-ear cress).